The primary structure comprises 334 residues: Holliday junction branch migration complex subunit RuvB (334 aa).

The large ATPase domain (RuvB-L) stretch occupies residues 1–179 (MTHKISVLHQ…FAFTGRVDYY (179 aa)). Residues leucine 18, arginine 19, glycine 60, lysine 63, threonine 64, serine 65, 126 to 128 (EDF), arginine 169, tyrosine 179, and arginine 216 contribute to the ATP site. Threonine 64 is a Mg(2+) binding site. The small ATPAse domain (RuvB-S) stretch occupies residues 180–250 (TDEDLVSILS…VAEKALAMLL (71 aa)). A head domain (RuvB-H) region spans residues 253-334 (NLGLNEIDIK…RNPKDRWGEE (82 aa)). The DNA site is built by arginine 308 and arginine 313.

This sequence belongs to the RuvB family. As to quaternary structure, homohexamer. Forms an RuvA(8)-RuvB(12)-Holliday junction (HJ) complex. HJ DNA is sandwiched between 2 RuvA tetramers; dsDNA enters through RuvA and exits via RuvB. An RuvB hexamer assembles on each DNA strand where it exits the tetramer. Each RuvB hexamer is contacted by two RuvA subunits (via domain III) on 2 adjacent RuvB subunits; this complex drives branch migration. In the full resolvosome a probable DNA-RuvA(4)-RuvB(12)-RuvC(2) complex forms which resolves the HJ.

The protein resides in the cytoplasm. The catalysed reaction is ATP + H2O = ADP + phosphate + H(+). The RuvA-RuvB-RuvC complex processes Holliday junction (HJ) DNA during genetic recombination and DNA repair, while the RuvA-RuvB complex plays an important role in the rescue of blocked DNA replication forks via replication fork reversal (RFR). RuvA specifically binds to HJ cruciform DNA, conferring on it an open structure. The RuvB hexamer acts as an ATP-dependent pump, pulling dsDNA into and through the RuvAB complex. RuvB forms 2 homohexamers on either side of HJ DNA bound by 1 or 2 RuvA tetramers; 4 subunits per hexamer contact DNA at a time. Coordinated motions by a converter formed by DNA-disengaged RuvB subunits stimulates ATP hydrolysis and nucleotide exchange. Immobilization of the converter enables RuvB to convert the ATP-contained energy into a lever motion, pulling 2 nucleotides of DNA out of the RuvA tetramer per ATP hydrolyzed, thus driving DNA branch migration. The RuvB motors rotate together with the DNA substrate, which together with the progressing nucleotide cycle form the mechanistic basis for DNA recombination by continuous HJ branch migration. Branch migration allows RuvC to scan DNA until it finds its consensus sequence, where it cleaves and resolves cruciform DNA. This chain is Holliday junction branch migration complex subunit RuvB, found in Chlamydia trachomatis serovar A (strain ATCC VR-571B / DSM 19440 / HAR-13).